A 539-amino-acid polypeptide reads, in one-letter code: Probable methionine--tRNA ligase, mitochondrial (539 aa).

The 'HIGH' region motif lies at 28–38; the sequence is FYVNAAPHLGH. The 'KMSKS' region signature appears at 326–330; sequence KMSKS. ATP is bound at residue Lys329.

This sequence belongs to the class-I aminoacyl-tRNA synthetase family.

It localises to the mitochondrion matrix. The enzyme catalyses tRNA(Met) + L-methionine + ATP = L-methionyl-tRNA(Met) + AMP + diphosphate. This chain is Probable methionine--tRNA ligase, mitochondrial, found in Schizosaccharomyces pombe (strain 972 / ATCC 24843) (Fission yeast).